A 144-amino-acid chain; its full sequence is Nucleoside diphosphate kinase (144 aa).

ATP-binding residues include lysine 11, phenylalanine 59, arginine 87, threonine 93, arginine 104, and asparagine 114. The Pros-phosphohistidine intermediate role is filled by histidine 117.

This sequence belongs to the NDK family. In terms of assembly, homotetramer. Requires Mg(2+) as cofactor.

It localises to the cytoplasm. The enzyme catalyses a 2'-deoxyribonucleoside 5'-diphosphate + ATP = a 2'-deoxyribonucleoside 5'-triphosphate + ADP. It catalyses the reaction a ribonucleoside 5'-diphosphate + ATP = a ribonucleoside 5'-triphosphate + ADP. In terms of biological role, major role in the synthesis of nucleoside triphosphates other than ATP. The ATP gamma phosphate is transferred to the NDP beta phosphate via a ping-pong mechanism, using a phosphorylated active-site intermediate. The polypeptide is Nucleoside diphosphate kinase (Sorangium cellulosum (strain So ce56) (Polyangium cellulosum (strain So ce56))).